The following is a 173-amino-acid chain: Shikimate kinase (173 aa).

Residue 11–16 participates in ATP binding; that stretch reads GAGKTT. Thr-15 is a binding site for Mg(2+). The substrate site is built by Asp-33, Arg-57, and Gly-79. An ATP-binding site is contributed by Arg-118. Residue Arg-140 participates in substrate binding.

This sequence belongs to the shikimate kinase family. In terms of assembly, monomer. It depends on Mg(2+) as a cofactor.

The protein localises to the cytoplasm. The catalysed reaction is shikimate + ATP = 3-phosphoshikimate + ADP + H(+). It functions in the pathway metabolic intermediate biosynthesis; chorismate biosynthesis; chorismate from D-erythrose 4-phosphate and phosphoenolpyruvate: step 5/7. Catalyzes the specific phosphorylation of the 3-hydroxyl group of shikimic acid using ATP as a cosubstrate. This chain is Shikimate kinase, found in Parabacteroides distasonis (strain ATCC 8503 / DSM 20701 / CIP 104284 / JCM 5825 / NCTC 11152).